The chain runs to 357 residues: Peptide chain release factor 1 (357 aa).

N5-methylglutamine is present on Q236.

This sequence belongs to the prokaryotic/mitochondrial release factor family. In terms of processing, methylated by PrmC. Methylation increases the termination efficiency of RF1.

It localises to the cytoplasm. Functionally, peptide chain release factor 1 directs the termination of translation in response to the peptide chain termination codons UAG and UAA. This Mycobacterium avium (strain 104) protein is Peptide chain release factor 1.